The following is a 386-amino-acid chain: tRNA-specific adenosine deaminase subunit tad2 (386 aa).

The CMP/dCMP-type deaminase domain maps to 212–322 (TQHETYMKLA…GNDRFGGCGS (111 aa)). Position 263 (His263) interacts with Zn(2+). Glu265 acts as the Proton donor in catalysis. 2 residues coordinate Zn(2+): Cys293 and Cys296.

It belongs to the cytidine and deoxycytidylate deaminase family. ADAT2 subfamily. In terms of assembly, heterodimer with Tad3. Requires Zn(2+) as cofactor.

It catalyses the reaction adenosine(34) in tRNA + H2O + H(+) = inosine(34) in tRNA + NH4(+). In terms of biological role, structural subunit of tRNA-specific adenosine deaminase, which deaminates adenosine-34 (the first, also called wobble position of the anticodon) to inosine in many tRNAs. Inosine-34 allows the decoding of 3 different nucleotides at the third position of mRNA codons, as inosine is able to pair with U, C, and A. The wobble inosine tRNA modification is essential for cell cycle progression in the G1/S and G2/M transitions in fission yeast. The protein is tRNA-specific adenosine deaminase subunit tad2 (tad2) of Schizosaccharomyces pombe (strain 972 / ATCC 24843) (Fission yeast).